The sequence spans 286 residues: Pyridoxine 4-dehydrogenase (286 aa).

The active-site Proton donor is the Y59. 210 to 218 lines the NADP(+) pocket; it reads FPLGGFTPL.

It belongs to the aldo/keto reductase family. Aldo/keto reductase 2 subfamily.

It carries out the reaction pyridoxine + NADP(+) = pyridoxal + NADPH + H(+). The catalysed reaction is pyridoxine + NAD(+) = pyridoxal + NADH + H(+). In terms of biological role, catalyzes the NAD(P)H-dependent reduction of pyridoxal to pyridoxine in vitro. Is not able to reduce 4-pyridoxate, and to oxidize pyridoxine or pyridoxamine. Has Kemp eliminase activity towards the non-physiological substrate 5-nitrobenzisoxazole, producing 4-nitro-2-cyanophenol; this activity is not considered to be physiologically relevant. This Escherichia coli (strain K12) protein is Pyridoxine 4-dehydrogenase.